We begin with the raw amino-acid sequence, 302 residues long: Putative fructose-bisphosphate aldolase (302 aa).

The active-site Proton donor is the Asp-86. Zn(2+) is bound by residues His-87, Asp-116, Glu-146, and His-192. Gly-193 provides a ligand contact to dihydroxyacetone phosphate. Zn(2+) is bound at residue His-223. Dihydroxyacetone phosphate contacts are provided by residues Gly-224 to Asp-226 and Asn-245 to Arg-248.

It belongs to the class II fructose-bisphosphate aldolase family. As to quaternary structure, homodimer. The cofactor is Zn(2+).

The catalysed reaction is beta-D-fructose 1,6-bisphosphate = D-glyceraldehyde 3-phosphate + dihydroxyacetone phosphate. It functions in the pathway carbohydrate degradation; glycolysis; D-glyceraldehyde 3-phosphate and glycerone phosphate from D-glucose: step 4/4. Catalyzes the aldol condensation of dihydroxyacetone phosphate (DHAP or glycerone-phosphate) with glyceraldehyde 3-phosphate (G3P) to form fructose 1,6-bisphosphate (FBP) in gluconeogenesis and the reverse reaction in glycolysis. The polypeptide is Putative fructose-bisphosphate aldolase (Coccidioides immitis (strain RS) (Valley fever fungus)).